The following is a 469-amino-acid chain: Cysteine--tRNA ligase (469 aa).

Cys-33 is a Zn(2+) binding site. Positions 35 to 45 (ATVQGLPHIGH) match the 'HIGH' region motif. Residues Cys-211, His-236, and Glu-240 each coordinate Zn(2+). A 'KMSKS' region motif is present at residues 267–271 (KMSKS). Position 270 (Lys-270) interacts with ATP.

This sequence belongs to the class-I aminoacyl-tRNA synthetase family. Monomer. The cofactor is Zn(2+).

It is found in the cytoplasm. It carries out the reaction tRNA(Cys) + L-cysteine + ATP = L-cysteinyl-tRNA(Cys) + AMP + diphosphate. This Mycobacterium bovis (strain ATCC BAA-935 / AF2122/97) protein is Cysteine--tRNA ligase (cysS).